Reading from the N-terminus, the 208-residue chain is MGCATTSVKIASIVLNAVLGFLAAGAIGWIAYNADTETEEFVIAAYIACSLILVFALLGIFAAIRESVVLTATSAVFLLILAILQIVSTCLFLHEFDVKSGRDMVEVAWQANNMDSLQQKHECCGQSSAQDYIHLSLLIPPSCYADLQQTPDHLYLDGCIEKVQSFYESDKLRFIIVSWVLVAFELICFALAVFLAISFKNKQRRMEF.

Helical transmembrane passes span 10–30, 41–61, 67–87, and 174–194; these read IASIVLNAVLGFLAAGAIGWI, FVIAAYIACSLILVFALLGIF, SVVLTATSAVFLLILAILQIV, and FIIVSWVLVAFELICFALAVF.

The protein belongs to the tetraspanin (TM4SF) family. Transiently expressed on motor axons, growth cones and terminal arbors.

The protein resides in the membrane. It localises to the synapse. In terms of biological role, facilitates synapse formation. The sequence is that of Protein late bloomer (lbm) from Drosophila melanogaster (Fruit fly).